The primary structure comprises 96 residues: Co-chaperonin GroES (96 aa).

This sequence belongs to the GroES chaperonin family. As to quaternary structure, heptamer of 7 subunits arranged in a ring. Interacts with the chaperonin GroEL.

Its subcellular location is the cytoplasm. Its function is as follows. Together with the chaperonin GroEL, plays an essential role in assisting protein folding. The GroEL-GroES system forms a nano-cage that allows encapsulation of the non-native substrate proteins and provides a physical environment optimized to promote and accelerate protein folding. GroES binds to the apical surface of the GroEL ring, thereby capping the opening of the GroEL channel. This chain is Co-chaperonin GroES, found in Hyphomonas neptunium (strain ATCC 15444).